A 591-amino-acid chain; its full sequence is Coiled-coil domain-containing protein 148 (591 aa).

Coiled coils occupy residues 166–195, 352–417, and 466–498; these read VKKQLKTVFERLRLEQQRIENDLSDWSIKI, MLAK…KKKK, and ERRLMEKKEVALQEAHEDKERARRLEALRKQVA.

The polypeptide is Coiled-coil domain-containing protein 148 (CCDC148) (Homo sapiens (Human)).